The primary structure comprises 391 residues: UPF0229 protein BAA_0633 (391 aa).

Over residues 1 to 16 the composition is skewed to polar residues; the sequence is MGEENQPNYTISQENW. 2 disordered regions span residues 1 to 31 and 80 to 117; these read MGEE…RHQE and HVGQ…GDAA. Basic and acidic residues predominate over residues 21–31; that stretch reads KGYDDQQRHQE. A compositionally biased stretch (gly residues) spans 98–115; that stretch reads GSGGQKQKGPGKGQGAGD.

It belongs to the UPF0229 family.

This chain is UPF0229 protein BAA_0633, found in Bacillus anthracis (strain A0248).